A 202-amino-acid chain; its full sequence is Na(+)-translocating NADH-quinone reductase subunit E (202 aa).

Transmembrane regions (helical) follow at residues 11–31 (SVFIENMALSFFLGMCTFIAV), 35–55 (IETAVGLGIAVVIVQTLTVPA), 81–101 (FIALMACIGVIAAMVQILEMV), 114–134 (GIFLPLITVNCAILAGSLFMI), 144–164 (VVYGVGSGFGWALAITAMAGV), and 180–200 (LGITFISAGLMALGFMAFSGI).

The protein belongs to the NqrDE/RnfAE family. In terms of assembly, composed of six subunits; NqrA, NqrB, NqrC, NqrD, NqrE and NqrF.

The protein resides in the cell inner membrane. The enzyme catalyses a ubiquinone + n Na(+)(in) + NADH + H(+) = a ubiquinol + n Na(+)(out) + NAD(+). Functionally, NQR complex catalyzes the reduction of ubiquinone-1 to ubiquinol by two successive reactions, coupled with the transport of Na(+) ions from the cytoplasm to the periplasm. NqrA to NqrE are probably involved in the second step, the conversion of ubisemiquinone to ubiquinol. This is Na(+)-translocating NADH-quinone reductase subunit E from Methylococcus capsulatus (strain ATCC 33009 / NCIMB 11132 / Bath).